Consider the following 609-residue polypeptide: Interleukin-1 receptor-associated kinase 3 (609 aa).

A Death domain is found at 41-106 (WRGLAERLSN…RAIHLIINYG (66 aa)). Position 110 is a phosphothreonine (threonine 110). A Protein kinase domain is found at 178–463 (FHKDFLIGEG…SSLESTQPSL (286 aa)). ATP is bound by residues 184–192 (IGEGEIFEV), lysine 205, 308–311 (SSAN), and aspartate 324. Serine 480 carries the phosphoserine modification.

Belongs to the protein kinase superfamily. TKL Ser/Thr protein kinase family. Pelle subfamily. Monomer. Homodimer. May interact with IRAK4 (when phosphorylated). Interacts (when phosphorylated at Thr-110) with PIN1 (via WW domain) in response to IL33-mediated (but not TLR4 ligand LPS) dendritic cell stimulation. In terms of tissue distribution, expressed in inflamed lung macrophages (at protein level). Expressed in dendritic cells (at protein level). Highly expressed in liver and thymus and at lower levels in heart, brain, spleen and kidney.

Its subcellular location is the cytoplasm. The protein resides in the nucleus. Its function is as follows. Putative inactive protein kinase which regulates signaling downstream of immune receptors including IL1R and Toll-like receptors. Inhibits dissociation of IRAK1 and IRAK4 from the Toll-like receptor signaling complex by either inhibiting the phosphorylation of IRAK1 and IRAK4 or stabilizing the receptor complex. Upon IL33-induced lung inflammation, positively regulates expression of IL6, CSF3, CXCL2 and CCL5 mRNAs in dendritic cells. This chain is Interleukin-1 receptor-associated kinase 3, found in Mus musculus (Mouse).